The sequence spans 342 residues: Dihydroorotate dehydrogenase (quinone) (342 aa).

FMN-binding positions include 61–65 (AGLDK) and T85. Substrate is bound at residue K65. 110–114 (NRMGF) contributes to the substrate binding site. 2 residues coordinate FMN: N138 and N171. N171 serves as a coordination point for substrate. S174 acts as the Nucleophile in catalysis. Residue N176 participates in substrate binding. K216 and T244 together coordinate FMN. Residue 245–246 (NT) participates in substrate binding. FMN is bound by residues G267, G296, and 317–318 (YS).

Belongs to the dihydroorotate dehydrogenase family. Type 2 subfamily. In terms of assembly, monomer. FMN serves as cofactor.

It localises to the cell membrane. The catalysed reaction is (S)-dihydroorotate + a quinone = orotate + a quinol. The protein operates within pyrimidine metabolism; UMP biosynthesis via de novo pathway; orotate from (S)-dihydroorotate (quinone route): step 1/1. Its function is as follows. Catalyzes the conversion of dihydroorotate to orotate with quinone as electron acceptor. This chain is Dihydroorotate dehydrogenase (quinone), found in Pseudomonas aeruginosa (strain LESB58).